A 114-amino-acid chain; its full sequence is Lymphotactin (114 aa).

The signal sequence occupies residues 1–21 (MRLLLLTFLGVCCFAAWVVEG). Cysteines 32 and 69 form a disulfide. The disordered stretch occupies residues 87-114 (RASASKSKAETIPTQAQRSASTAVTLTG). The span at 98 to 114 (IPTQAQRSASTAVTLTG) shows a compositional bias: polar residues.

The protein belongs to the intercrine gamma family.

It localises to the secreted. In terms of biological role, chemotactic activity for lymphocytes but not for monocytes or neutrophils. In thymus, mediates medullary accumulation of thymic dendritic cells and contributes to regulatoy T cell development, playing a role in self-tolerance establishment. The polypeptide is Lymphotactin (Xcl1) (Rattus norvegicus (Rat)).